A 371-amino-acid polypeptide reads, in one-letter code: Anhydro-N-acetylmuramic acid kinase (371 aa).

12–20 (GTVLDGNID) is a binding site for ATP.

It belongs to the anhydro-N-acetylmuramic acid kinase family.

It catalyses the reaction 1,6-anhydro-N-acetyl-beta-muramate + ATP + H2O = N-acetyl-D-muramate 6-phosphate + ADP + H(+). It participates in amino-sugar metabolism; 1,6-anhydro-N-acetylmuramate degradation. It functions in the pathway cell wall biogenesis; peptidoglycan recycling. Catalyzes the specific phosphorylation of 1,6-anhydro-N-acetylmuramic acid (anhMurNAc) with the simultaneous cleavage of the 1,6-anhydro ring, generating MurNAc-6-P. Is required for the utilization of anhMurNAc either imported from the medium or derived from its own cell wall murein, and thus plays a role in cell wall recycling. This is Anhydro-N-acetylmuramic acid kinase from Mesorhizobium japonicum (strain LMG 29417 / CECT 9101 / MAFF 303099) (Mesorhizobium loti (strain MAFF 303099)).